We begin with the raw amino-acid sequence, 78 residues long: Sec-independent protein translocase protein TatA (78 aa).

The chain crosses the membrane as a helical span at residues 1–21; that stretch reads MGMPSMPELLIILLIVVLLFG. The tract at residues 46-78 is disordered; the sequence is DEEEVATENKKEIEEKTTASTTKTTADQDTTKA. A compositionally biased stretch (basic and acidic residues) spans 52-62; it reads TENKKEIEEKT. Over residues 63-78 the composition is skewed to low complexity; sequence TASTTKTTADQDTTKA.

This sequence belongs to the TatA/E family. The Tat system comprises two distinct complexes: a TatABC complex, containing multiple copies of TatA, TatB and TatC subunits, and a separate TatA complex, containing only TatA subunits. Substrates initially bind to the TatABC complex, which probably triggers association of the separate TatA complex to form the active translocon.

It is found in the cell inner membrane. Functionally, part of the twin-arginine translocation (Tat) system that transports large folded proteins containing a characteristic twin-arginine motif in their signal peptide across membranes. TatA could form the protein-conducting channel of the Tat system. This chain is Sec-independent protein translocase protein TatA, found in Nitratiruptor sp. (strain SB155-2).